The following is a 267-amino-acid chain: Orotidine 5'-phosphate decarboxylase (267 aa).

Position 2 is an N-acetylserine (S2). Substrate is bound by residues D37, 59 to 61, and 91 to 100; these read KTH and DRKFADIGNT. K93 functions as the Proton donor in the catalytic mechanism. Residues K93 and K209 each participate in a glycyl lysine isopeptide (Lys-Gly) (interchain with G-Cter in ubiquitin) cross-link. Substrate is bound by residues Y217 and R235. K253 is covalently cross-linked (Glycyl lysine isopeptide (Lys-Gly) (interchain with G-Cter in ubiquitin)).

It belongs to the OMP decarboxylase family.

The enzyme catalyses orotidine 5'-phosphate + H(+) = UMP + CO2. It participates in pyrimidine metabolism; UMP biosynthesis via de novo pathway; UMP from orotate: step 2/2. The protein is Orotidine 5'-phosphate decarboxylase (URA3) of Saccharomyces cerevisiae (strain ATCC 204508 / S288c) (Baker's yeast).